Reading from the N-terminus, the 314-residue chain is Peroxidase 2 (314 aa).

Positions 1 to 23 (MASASSVSLMLLVAAAMASAASA) are cleaved as a signal peptide. Q24 carries the pyrrolidone carboxylic acid modification. Disulfide bonds link C34–C109, C67–C72, C115–C310, and C194–C219. The active-site Proton acceptor is the H65. 5 residues coordinate Ca(2+): D66, V69, G71, D73, and S75. Residue N148 is glycosylated (N-linked (GlcNAc...) asparagine). Residue P157 coordinates substrate. An N-linked (GlcNAc...) asparagine glycan is attached at N169. H187 provides a ligand contact to heme b. T188 is a Ca(2+) binding site. Residue N203 is glycosylated (N-linked (GlcNAc...) asparagine). Ca(2+) is bound by residues D234, T237, and D242. 2 N-linked (GlcNAc...) asparagine glycosylation sites follow: N274 and N309.

The protein belongs to the peroxidase family. Classical plant (class III) peroxidase subfamily. It depends on Ca(2+) as a cofactor. Requires heme b as cofactor.

It localises to the secreted. It catalyses the reaction 2 a phenolic donor + H2O2 = 2 a phenolic radical donor + 2 H2O. Removal of H(2)O(2), oxidation of toxic reductants, biosynthesis and degradation of lignin, suberization, auxin catabolism, response to environmental stresses such as wounding, pathogen attack and oxidative stress. These functions might be dependent on each isozyme/isoform in each plant tissue. In Oryza sativa subsp. indica (Rice), this protein is Peroxidase 2 (PRX112).